We begin with the raw amino-acid sequence, 510 residues long: NAD(P)H-quinone oxidoreductase subunit 2, chloroplastic (510 aa).

The next 13 membrane-spanning stretches (helical) occupy residues 26 to 46, 57 to 77, 99 to 119, 124 to 144, 149 to 169, 184 to 204, 227 to 247, 295 to 315, 323 to 343, 354 to 374, 395 to 415, 418 to 438, and 484 to 504; these read LFDGSFIFPECILIFGLILLL, IPWLYFISSTSLVMSIMALLF, IFQVLILLCSTLCIPLSVEYI, MAITEFLLFVLTATLGGMFLC, LITIFVAPECFSFCSYLLSGY, LLMGGASSSILVHGFSWLYGL, PGISIALIFITVGIGFKLSPA, WHLLLEILALLSMILGNLIAI, MLAYSSIGQIGYIIIGIIVGD, YMLFYISMNLGTFACIILFGL, ALSLALCLLSLGGLPPLAGFF, LYLFWCGWQAGLYFLVLIALV, and MIVCVIASTIPGISMNPIIAI.

The protein belongs to the complex I subunit 2 family. NDH is composed of at least 16 different subunits, 5 of which are encoded in the nucleus.

The protein resides in the plastid. Its subcellular location is the chloroplast thylakoid membrane. It carries out the reaction a plastoquinone + NADH + (n+1) H(+)(in) = a plastoquinol + NAD(+) + n H(+)(out). It catalyses the reaction a plastoquinone + NADPH + (n+1) H(+)(in) = a plastoquinol + NADP(+) + n H(+)(out). NDH shuttles electrons from NAD(P)H:plastoquinone, via FMN and iron-sulfur (Fe-S) centers, to quinones in the photosynthetic chain and possibly in a chloroplast respiratory chain. The immediate electron acceptor for the enzyme in this species is believed to be plastoquinone. Couples the redox reaction to proton translocation, and thus conserves the redox energy in a proton gradient. This chain is NAD(P)H-quinone oxidoreductase subunit 2, chloroplastic, found in Trachelium caeruleum (Blue throatwort).